Here is an 869-residue protein sequence, read N- to C-terminus: Bifunctional uridylyltransferase/uridylyl-removing enzyme (869 aa).

The segment at 1 to 332 (MTDAPAERPD…QFDGEATPES (332 aa)) is uridylyltransferase. Positions 333 to 691 (LGGGFSLRRG…RRAVPDNDAL (359 aa)) are uridylyl-removing. The HD domain occupies 450–572 (VDQHTLMVLR…VGTRERLDYL (123 aa)). ACT domains are found at residues 692-774 (EVFV…RAVP) and 798-869 (RISL…LDPV).

It belongs to the GlnD family. Mg(2+) serves as cofactor.

It carries out the reaction [protein-PII]-L-tyrosine + UTP = [protein-PII]-uridylyl-L-tyrosine + diphosphate. It catalyses the reaction [protein-PII]-uridylyl-L-tyrosine + H2O = [protein-PII]-L-tyrosine + UMP + H(+). With respect to regulation, uridylyltransferase (UTase) activity is inhibited by glutamine, while glutamine activates uridylyl-removing (UR) activity. In terms of biological role, modifies, by uridylylation and deuridylylation, the PII regulatory proteins (GlnB and homologs), in response to the nitrogen status of the cell that GlnD senses through the glutamine level. Under low glutamine levels, catalyzes the conversion of the PII proteins and UTP to PII-UMP and PPi, while under higher glutamine levels, GlnD hydrolyzes PII-UMP to PII and UMP (deuridylylation). Thus, controls uridylylation state and activity of the PII proteins, and plays an important role in the regulation of nitrogen assimilation and metabolism. The protein is Bifunctional uridylyltransferase/uridylyl-removing enzyme of Xanthomonas oryzae pv. oryzae (strain MAFF 311018).